Reading from the N-terminus, the 473-residue chain is UDP-N-acetylmuramate--L-alanine ligase (473 aa).

Residue 115–121 (GTHGKTT) coordinates ATP.

Belongs to the MurCDEF family.

Its subcellular location is the cytoplasm. It carries out the reaction UDP-N-acetyl-alpha-D-muramate + L-alanine + ATP = UDP-N-acetyl-alpha-D-muramoyl-L-alanine + ADP + phosphate + H(+). The protein operates within cell wall biogenesis; peptidoglycan biosynthesis. In terms of biological role, cell wall formation. The chain is UDP-N-acetylmuramate--L-alanine ligase from Rhizorhabdus wittichii (strain DSM 6014 / CCUG 31198 / JCM 15750 / NBRC 105917 / EY 4224 / RW1) (Sphingomonas wittichii).